Reading from the N-terminus, the 92-residue chain is Small ribosomal subunit protein uS19 (92 aa).

The segment at 1 to 27 is disordered; it reads MARSIKKGPFADDHLKKKVEAQSGSEK. Residues 9 to 27 show a composition bias toward basic and acidic residues; the sequence is PFADDHLKKKVEAQSGSEK.

This sequence belongs to the universal ribosomal protein uS19 family.

Functionally, protein S19 forms a complex with S13 that binds strongly to the 16S ribosomal RNA. The chain is Small ribosomal subunit protein uS19 from Staphylococcus saprophyticus subsp. saprophyticus (strain ATCC 15305 / DSM 20229 / NCIMB 8711 / NCTC 7292 / S-41).